Consider the following 98-residue polypeptide: Large ribosomal subunit protein uL23 (98 aa).

This sequence belongs to the universal ribosomal protein uL23 family. As to quaternary structure, part of the 50S ribosomal subunit. Contacts protein L29, and trigger factor when it is bound to the ribosome.

One of the early assembly proteins it binds 23S rRNA. One of the proteins that surrounds the polypeptide exit tunnel on the outside of the ribosome. Forms the main docking site for trigger factor binding to the ribosome. The polypeptide is Large ribosomal subunit protein uL23 (Bifidobacterium longum (strain DJO10A)).